Reading from the N-terminus, the 159-residue chain is Cyclic pyranopterin monophosphate synthase (159 aa).

Substrate contacts are provided by residues 75-77 (LCH) and 113-114 (ME). Asp-128 is a catalytic residue.

The protein belongs to the MoaC family. Homohexamer; trimer of dimers.

The catalysed reaction is (8S)-3',8-cyclo-7,8-dihydroguanosine 5'-triphosphate = cyclic pyranopterin phosphate + diphosphate. It functions in the pathway cofactor biosynthesis; molybdopterin biosynthesis. Its function is as follows. Catalyzes the conversion of (8S)-3',8-cyclo-7,8-dihydroguanosine 5'-triphosphate to cyclic pyranopterin monophosphate (cPMP). The chain is Cyclic pyranopterin monophosphate synthase from Cupriavidus necator (strain ATCC 17699 / DSM 428 / KCTC 22496 / NCIMB 10442 / H16 / Stanier 337) (Ralstonia eutropha).